The following is a 162-amino-acid chain: Probable chemoreceptor glutamine deamidase CheD (162 aa).

Belongs to the CheD family.

It catalyses the reaction L-glutaminyl-[protein] + H2O = L-glutamyl-[protein] + NH4(+). Probably deamidates glutamine residues to glutamate on methyl-accepting chemotaxis receptors (MCPs), playing an important role in chemotaxis. The sequence is that of Probable chemoreceptor glutamine deamidase CheD from Caldanaerobacter subterraneus subsp. tengcongensis (strain DSM 15242 / JCM 11007 / NBRC 100824 / MB4) (Thermoanaerobacter tengcongensis).